Reading from the N-terminus, the 779-residue chain is Filament-like plant protein 1 (779 aa).

Over residues 1-14 (MEKRKRESSERSFG) the composition is skewed to basic and acidic residues. Disordered regions lie at residues 1–55 (MEKR…ETEK), 253–274 (ASFN…MDVS), and 315–336 (PETP…VVVP). Positions 47-200 (VSLEVETEKE…KENVMLRHEL (154 aa)) form a coiled coil. Over residues 256–272 (NDHRSTDSHSDGGERMD) the composition is skewed to basic and acidic residues. Positions 324-336 (SGPESVTEEVVVP) are enriched in low complexity. The stretch at 337–674 (SENSLASEIE…ANCQKTIASL (338 aa)) forms a coiled coil. Residues 718–731 (FMTRNHPESIKPTK) show a composition bias toward basic and acidic residues. The segment at 718 to 764 (FMTRNHPESIKPTKETSPSSSSSTASAAVSMPVSTNRGSSEKNRNGF) is disordered. Over residues 733-752 (TSPSSSSSTASAAVSMPVST) the composition is skewed to low complexity.

This sequence belongs to the FPP family. Interacts with WPP/MAF proteins.

This Arabidopsis thaliana (Mouse-ear cress) protein is Filament-like plant protein 1 (FPP1).